Consider the following 467-residue polypeptide: MADTKPLHQTRFEAAVSVIQSLPKNGSFQPSNEMMLKFYSFYKQATLGPCNTARPGFWDPVGRYKWDAWNSLGDMSKEDAMIAYVDEMKKIIETMPVTDKVEELLQVIGPFYEIVEDKKHGRGSGVTSELGSVLTSTPNGKAVNGKAESSDSGAESDEEQAAAKEFKKEDEEDEEDETEHSEEEEKEVEQQPGHETSAESIVLNGLTKNSRVLITEEPTPLPTKCLSEPGDNVAIPEGEPDIQSAVINDSEADREEDCTEDMAAVQHLTSDSDSEIFCDSMEQFGQDEADHSLLLQDAMLNGDITENSAGGELKDGGEDGKQPGHGAQGKTWNGKSEHFSSRRERSLRMQPGGEGSRSGQIGSSGDGDGWGSDRGPIGNLNEQIAVVLMRLQEDMQNVLQRLHSLEVQTASQAQSLLRESNTQSVEKKPSGWPFGISPGTLALAVVWPFVVHWLMHVFLQKRRRKQT.

Residues 8–97 (HQTRFEAAVS…MKKIIETMPV (90 aa)) form the ACB domain. An acyl-CoA is bound by residues 19-28 (IQSLPKNGSF), 39-43 (YSFYK), Lys65, and Tyr84. Disordered regions lie at residues 119-204 (KHGR…IVLN), 219-240 (TPLP…EGEP), and 304-376 (ITEN…DRGP). Residues 125–139 (GVTSELGSVLTSTPN) are compositionally biased toward polar residues. Residues 170-187 (DEEDEEDETEHSEEEEKE) show a composition bias toward acidic residues. Composition is skewed to basic and acidic residues over residues 312–322 (ELKDGGEDGKQ) and 335–347 (KSEH…ERSL). Positions 352–372 (GGEGSRSGQIGSSGDGDGWGS) are enriched in gly residues. A coiled-coil region spans residues 382-411 (EQIAVVLMRLQEDMQNVLQRLHSLEVQTAS). A helical transmembrane segment spans residues 439–459 (GTLALAVVWPFVVHWLMHVFL).

It belongs to the ATG37 family.

Its subcellular location is the peroxisome membrane. Its function is as follows. Acyl-CoA binding protein which acts as the peroxisome receptor for pexophagy but is dispensable for aggrephagy and nonselective autophagy. Binds medium- and long-chain acyl-CoA esters. This is Acyl-CoA-binding domain-containing protein 5 (acbd5) from Xenopus laevis (African clawed frog).